Here is a 312-residue protein sequence, read N- to C-terminus: Beta-ketoacyl-[acyl-carrier-protein] synthase III (312 aa).

Residues cysteine 112 and histidine 237 contribute to the active site. The segment at 238–242 is ACP-binding; the sequence is QANIR. Asparagine 267 is an active-site residue.

This sequence belongs to the thiolase-like superfamily. FabH family. Homodimer.

Its subcellular location is the cytoplasm. The catalysed reaction is malonyl-[ACP] + acetyl-CoA + H(+) = 3-oxobutanoyl-[ACP] + CO2 + CoA. It functions in the pathway lipid metabolism; fatty acid biosynthesis. Catalyzes the condensation reaction of fatty acid synthesis by the addition to an acyl acceptor of two carbons from malonyl-ACP. Catalyzes the first condensation reaction which initiates fatty acid synthesis and may therefore play a role in governing the total rate of fatty acid production. Possesses both acetoacetyl-ACP synthase and acetyl transacylase activities. Its substrate specificity determines the biosynthesis of branched-chain and/or straight-chain of fatty acids. The protein is Beta-ketoacyl-[acyl-carrier-protein] synthase III of Bacillus pumilus (strain SAFR-032).